The sequence spans 631 residues: Phosphomethylpyrimidine synthase (631 aa).

Residues N239, M268, Y297, H333, 353–355 (SRG), 394–397 (DGLR), and E433 contribute to the substrate site. H437 is a Zn(2+) binding site. Y460 is a substrate binding site. Position 501 (H501) interacts with Zn(2+). [4Fe-4S] cluster contacts are provided by C581, C584, and C589.

Belongs to the ThiC family. In terms of assembly, homodimer. Requires [4Fe-4S] cluster as cofactor.

It carries out the reaction 5-amino-1-(5-phospho-beta-D-ribosyl)imidazole + S-adenosyl-L-methionine = 4-amino-2-methyl-5-(phosphooxymethyl)pyrimidine + CO + 5'-deoxyadenosine + formate + L-methionine + 3 H(+). The protein operates within cofactor biosynthesis; thiamine diphosphate biosynthesis. In terms of biological role, catalyzes the synthesis of the hydroxymethylpyrimidine phosphate (HMP-P) moiety of thiamine from aminoimidazole ribotide (AIR) in a radical S-adenosyl-L-methionine (SAM)-dependent reaction. The polypeptide is Phosphomethylpyrimidine synthase (Salmonella schwarzengrund (strain CVM19633)).